The primary structure comprises 87 residues: Protein ORF3 (87 aa).

The interval glycine 58–methionine 87 is disordered. A PTAP/PSAP motif motif is present at residues proline 67 to proline 70.

It belongs to the hepevirus ORF3 protein family. Palmitoylated in the N-terminus.

The protein localises to the host endoplasmic reticulum membrane. It localises to the host cytoplasm. It is found in the host cytoskeleton. Its subcellular location is the virion. The protein resides in the host cell membrane. Small multifunctional phosphoprotein involved in virion morphogenesis, egress and counteracting host innate immunity. In Avian hepatitis E virus (isolate Chicken/California/Meng) (AHEV), this protein is Protein ORF3.